A 115-amino-acid chain; its full sequence is NAD(P)H-quinone oxidoreductase subunit M (115 aa).

Belongs to the complex I NdhM subunit family. NDH-1 can be composed of about 15 different subunits; different subcomplexes with different compositions have been identified which probably have different functions.

The protein localises to the cellular thylakoid membrane. The catalysed reaction is a plastoquinone + NADH + (n+1) H(+)(in) = a plastoquinol + NAD(+) + n H(+)(out). It catalyses the reaction a plastoquinone + NADPH + (n+1) H(+)(in) = a plastoquinol + NADP(+) + n H(+)(out). Its function is as follows. NDH-1 shuttles electrons from an unknown electron donor, via FMN and iron-sulfur (Fe-S) centers, to quinones in the respiratory and/or the photosynthetic chain. The immediate electron acceptor for the enzyme in this species is believed to be plastoquinone. Couples the redox reaction to proton translocation, and thus conserves the redox energy in a proton gradient. Cyanobacterial NDH-1 also plays a role in inorganic carbon-concentration. This chain is NAD(P)H-quinone oxidoreductase subunit M, found in Prochlorococcus marinus (strain NATL2A).